Here is a 153-residue protein sequence, read N- to C-terminus: Small ribosomal subunit protein bS16 (153 aa).

Residues Glu-114–Lys-153 form a disordered region. A compositionally biased stretch (low complexity) spans Ala-137–Lys-153.

It belongs to the bacterial ribosomal protein bS16 family.

This is Small ribosomal subunit protein bS16 from Rhodococcus opacus (strain B4).